A 292-amino-acid polypeptide reads, in one-letter code: Malectin (292 aa).

An N-terminal signal peptide occupies residues 1–28 (MLGAWAVEGTAVALLRLLLLLLPPAIRG). Over 29 to 269 (PGLGVAGVAG…TPNPYASDNS (241 aa)) the chain is Lumenal. The a carbohydrate site is built by Y82, Y104, Y131, F132, and D201. The tract at residues 221–265 (LQPHPGLEKKEEEEEEEEYDEGSNLKKQTNKNRVQSGPRTPNPYA) is disordered. The segment covering 231–241 (EEEEEEEEYDE) has biased composition (acidic residues). Positions 245–265 (LKKQTNKNRVQSGPRTPNPYA) are enriched in polar residues. N268 is a glycosylation site (N-linked (GlcNAc...) asparagine). The helical transmembrane segment at 270 to 290 (SLMFPILVAFGVFIPTLFCLC) threads the bilayer. Over 291–292 (RL) the chain is Cytoplasmic.

It belongs to the malectin family. As to quaternary structure, interacts with the oligosaccharyltransferase (OST) complex.

The protein resides in the endoplasmic reticulum membrane. Its function is as follows. Carbohydrate-binding protein with a strong ligand preference for Glc2-N-glycan. May play a role in the early steps of protein N-glycosylation. The chain is Malectin from Homo sapiens (Human).